Reading from the N-terminus, the 247-residue chain is 3,4-dihydroxy-2-butanone 4-phosphate synthase (247 aa).

Residues 38 to 39 (RE), D43, 179 to 183 (RMGQT), and E203 contribute to the D-ribulose 5-phosphate site. Mg(2+) is bound at residue E39.

This sequence belongs to the DHBP synthase family. As to quaternary structure, homodimer. The cofactor is Mg(2+). Requires Mn(2+) as cofactor.

It catalyses the reaction D-ribulose 5-phosphate = (2S)-2-hydroxy-3-oxobutyl phosphate + formate + H(+). The protein operates within cofactor biosynthesis; riboflavin biosynthesis; 2-hydroxy-3-oxobutyl phosphate from D-ribulose 5-phosphate: step 1/1. Its function is as follows. Catalyzes the conversion of D-ribulose 5-phosphate to formate and 3,4-dihydroxy-2-butanone 4-phosphate. The chain is 3,4-dihydroxy-2-butanone 4-phosphate synthase from Methanosarcina mazei (strain ATCC BAA-159 / DSM 3647 / Goe1 / Go1 / JCM 11833 / OCM 88) (Methanosarcina frisia).